Here is a 405-residue protein sequence, read N- to C-terminus: Macrolide efflux protein A (405 aa).

11 helical membrane-spanning segments follow: residues 14 to 34 (IWAG…AIIF), 48 to 68 (MASL…GVLV), 76 to 98 (IMIG…AFYM), 145 to 165 (SLQS…YSVW), 168 to 188 (NAII…VAIV), 222 to 242 (FALL…NALF), 259 to 279 (ITEI…GLFG), 285 to 305 (ILLI…SGLL), 310 to 330 (FFIF…YSGV), 350 to 370 (LTGS…ALFA), and 373 to 393 (IGVN…AIVC).

This sequence belongs to the major facilitator superfamily. Drug:H(+) antiporter-3 (DHA3) (TC 2.A.1.21) family.

Its subcellular location is the cell membrane. In terms of biological role, confers resistance to 14-membered macrolides including erythromycin and to 15-membered macrolides but not to 16-membered macrolides, lincosamides or analogs of streptogramin B. May function as an efflux pump to regulate intracellular macrolide levels. This Streptococcus pyogenes serotype M6 (strain ATCC BAA-946 / MGAS10394) protein is Macrolide efflux protein A.